Consider the following 261-residue polypeptide: Anamorsin homolog (261 aa).

Positions 4 to 134 are N-terminal SAM-like domain; the sequence is VQENNQVLYI…EIGSAAKLSL (131 aa). The segment at 134-173 is linker; it reads LGGGANKAKVAAVWKLDVDDDGEAEERIDEDELLDEEDKV. Residues Cys-183, Cys-192, Cys-195, and Cys-197 each coordinate [2Fe-2S] cluster. The interval 183 to 197 is fe-S binding site A; it reads CGTTGKRKACKDCSC. [4Fe-4S] cluster contacts are provided by Cys-222, Cys-225, Cys-233, and Cys-236. 2 consecutive short sequence motifs (cx2C motif) follow at residues 222-225 and 233-236; these read CGSC and CATC. Residues 222-236 are fe-S binding site B; sequence CGSCYLGDAFRCATC.

It belongs to the anamorsin family. As to quaternary structure, monomer. Requires [2Fe-2S] cluster as cofactor. [4Fe-4S] cluster serves as cofactor.

It localises to the cytoplasm. The protein localises to the mitochondrion intermembrane space. Its function is as follows. Component of the cytosolic iron-sulfur (Fe-S) protein assembly (CIA) machinery. Required for the maturation of extramitochondrial Fe-S proteins. Part of an electron transfer chain functioning in an early step of cytosolic Fe-S biogenesis, facilitating the de novo assembly of a [4Fe-4S] cluster on the cytosolic Fe-S scaffold complex. Electrons are transferred from NADPH via a FAD- and FMN-containing diflavin oxidoreductase. Together with the diflavin oxidoreductase, also required for the assembly of the diferric tyrosyl radical cofactor of ribonucleotide reductase (RNR), probably by providing electrons for reduction during radical cofactor maturation in the catalytic small subunit. This chain is Anamorsin homolog, found in Culex quinquefasciatus (Southern house mosquito).